Consider the following 611-residue polypeptide: Endo-1,4-beta-xylanase A (611 aa).

The N-terminal stretch at methionine 1–alanine 26 is a signal peptide. The CBM2 domain maps to glutamine 27–serine 128. 3 cysteine pairs are disulfide-bonded: cysteine 31/cysteine 125, cysteine 184/cysteine 215, and cysteine 194/cysteine 209. The CBM10 domain occupies glutamine 183–arginine 212. One can recognise a GH10 domain in the interval serine 281–alanine 607. The Proton donor role is filled by glutamate 391. The Nucleophile role is filled by glutamate 510.

It belongs to the glycosyl hydrolase 10 (cellulase F) family.

It catalyses the reaction Endohydrolysis of (1-&gt;4)-beta-D-xylosidic linkages in xylans.. It participates in glycan degradation; xylan degradation. This is Endo-1,4-beta-xylanase A (xynA) from Cellvibrio japonicus (strain Ueda107) (Pseudomonas fluorescens subsp. cellulosa).